We begin with the raw amino-acid sequence, 62 residues long: Small ribosomal subunit protein eS27 (62 aa).

4 residues coordinate Zn(2+): Cys17, Cys20, Cys36, and Cys39. A C4-type zinc finger spans residues 17–39 (CPDCENEQLVFEKATSVVECTVC).

It belongs to the eukaryotic ribosomal protein eS27 family. In terms of assembly, part of the 30S ribosomal subunit. The cofactor is Zn(2+).

This chain is Small ribosomal subunit protein eS27, found in Methanocorpusculum labreanum (strain ATCC 43576 / DSM 4855 / Z).